A 68-amino-acid chain; its full sequence is MKLSVMFIVALVLSLSMTDGLPRRAENGGRIFRQHSPDSMDPQTRQIKTRTLCPEHCTNGCNMDMTCI.

An N-terminal signal peptide occupies residues 1–20 (MKLSVMFIVALVLSLSMTDG). Residues 21 to 50 (LPRRAENGGRIFRQHSPDSMDPQTRQIKTR) constitute a propeptide that is removed on maturation.

Post-translationally, contains 2 disulfide bonds. Expressed by the venom duct.

It localises to the secreted. The protein is Conotoxin ba14a of Conus bayani (Bayan's cone).